The chain runs to 514 residues: Retron Vc95 probable ATPase (514 aa).

The ATP-binding signature appears at 92–99 (GNNGSGKS).

In terms of biological role, probable ATPase component of antiviral defense system retron Vc95, composed of a non-coding RNA (ncRNA), a reverse transcriptase (RT), this protein and a putative HNH endonuclease. Expression of retron Vc95 confers protection against bacteriophages T2, T4 and T6. At multiplicity of infection (MOI) of 0.02 cultures slow growth when infected with T4 but do not collapse, at MOI 2 cultures enter growth stasis. In Vibrio cholerae serotype O1 biovar El Tor, this protein is Retron Vc95 probable ATPase.